We begin with the raw amino-acid sequence, 364 residues long: Dual-specificity RNA methyltransferase RlmN (364 aa).

The active-site Proton acceptor is Glu91. A Radical SAM core domain is found at 102–337; sequence GTLRITQCLS…AIIRKSKGQD (236 aa). A disulfide bridge connects residues Cys109 and Cys342. [4Fe-4S] cluster contacts are provided by Cys116, Cys120, and Cys123. S-adenosyl-L-methionine-binding positions include 169 to 170, Ser201, 223 to 225, and Asn299; these read GE and SLH. Cys342 acts as the S-methylcysteine intermediate in catalysis.

It belongs to the radical SAM superfamily. RlmN family. It depends on [4Fe-4S] cluster as a cofactor.

It localises to the cytoplasm. It catalyses the reaction adenosine(2503) in 23S rRNA + 2 reduced [2Fe-2S]-[ferredoxin] + 2 S-adenosyl-L-methionine = 2-methyladenosine(2503) in 23S rRNA + 5'-deoxyadenosine + L-methionine + 2 oxidized [2Fe-2S]-[ferredoxin] + S-adenosyl-L-homocysteine. It carries out the reaction adenosine(37) in tRNA + 2 reduced [2Fe-2S]-[ferredoxin] + 2 S-adenosyl-L-methionine = 2-methyladenosine(37) in tRNA + 5'-deoxyadenosine + L-methionine + 2 oxidized [2Fe-2S]-[ferredoxin] + S-adenosyl-L-homocysteine. In terms of biological role, specifically methylates position 2 of adenine 2503 in 23S rRNA and position 2 of adenine 37 in tRNAs. m2A2503 modification seems to play a crucial role in the proofreading step occurring at the peptidyl transferase center and thus would serve to optimize ribosomal fidelity. This Nitratidesulfovibrio vulgaris (strain ATCC 29579 / DSM 644 / CCUG 34227 / NCIMB 8303 / VKM B-1760 / Hildenborough) (Desulfovibrio vulgaris) protein is Dual-specificity RNA methyltransferase RlmN.